Consider the following 196-residue polypeptide: GTP cyclohydrolase 1 (196 aa).

Zn(2+)-binding residues include Cys-85, His-88, and Cys-156.

The protein belongs to the GTP cyclohydrolase I family. In terms of assembly, toroid-shaped homodecamer, composed of two pentamers of five dimers.

It catalyses the reaction GTP + H2O = 7,8-dihydroneopterin 3'-triphosphate + formate + H(+). The protein operates within cofactor biosynthesis; 7,8-dihydroneopterin triphosphate biosynthesis; 7,8-dihydroneopterin triphosphate from GTP: step 1/1. This Bacteroides thetaiotaomicron (strain ATCC 29148 / DSM 2079 / JCM 5827 / CCUG 10774 / NCTC 10582 / VPI-5482 / E50) protein is GTP cyclohydrolase 1.